Here is a 1347-residue protein sequence, read N- to C-terminus: BTB/POZ domain-containing protein 1 (1347 aa).

2 ANK repeats span residues 51 to 81 and 86 to 115; these read YGRT…DVFV and SGYT…SFRS. RCC1 repeat units follow at residues 148 to 198, 215 to 264, 265 to 322, and 324 to 372; these read GNEL…DKIL, SQNV…ALTK, FGSI…AWTD, and DIYS…CLLQ. BTB domains are found at residues 619–698 and 758–829; these read SDVT…LSPW and MDTV…VELF. Disordered regions lie at residues 1006-1029, 1104-1139, 1193-1237, and 1286-1347; these read SSNQ…NVVN, EKAD…SKQV, EGSS…PLSI, and GILK…RAVK. Positions 1013-1023 are enriched in basic and acidic residues; sequence LNKEDAEEKSP. Composition is skewed to polar residues over residues 1208–1237 and 1297–1306; these read SNGS…PLSI and NRKQGQASKQ. Basic residues predominate over residues 1336–1347; sequence TTHKKGKARAVK.

Interacts with cul3.

It participates in protein modification; protein ubiquitination. Probable substrate-specific adapter of an E3 ubiquitin-protein ligase complex which mediates the ubiquitination and subsequent proteasomal degradation of target proteins. In Schizosaccharomyces pombe (strain 972 / ATCC 24843) (Fission yeast), this protein is BTB/POZ domain-containing protein 1 (btb1).